The sequence spans 510 residues: Probable ADP-ribosylation factor-binding protein C1F3.05 (510 aa).

The VHS domain occupies 14 to 150; the sequence is ATDQFNLEPN…LMAFRGYKFP (137 aa). One can recognise a GAT domain in the interval 177-301; it reads LEAHKAKLQE…VIEECSNSDL (125 aa). The GAE domain maps to 391-510; the sequence is TNSSLTSILQ…VEQGESHLPL (120 aa).

The protein localises to the golgi apparatus. The protein resides in the trans-Golgi network. Its function is as follows. May play a role in the regulation of membrane traffic through the trans-Golgi network. This is Probable ADP-ribosylation factor-binding protein C1F3.05 from Schizosaccharomyces pombe (strain 972 / ATCC 24843) (Fission yeast).